A 377-amino-acid polypeptide reads, in one-letter code: Beta-lactamase (377 aa).

The first 19 residues, 1–19, serve as a signal peptide directing secretion; sequence MFKTTLCALLITASCSTFA. Serine 80 serves as the catalytic Acyl-ester intermediate. 6 residues coordinate a beta-lactam: serine 80, glutamine 136, tyrosine 166, asparagine 168, alanine 334, and asparagine 359.

This sequence belongs to the class-C beta-lactamase family. Monomer.

It localises to the periplasm. The enzyme catalyses a beta-lactam + H2O = a substituted beta-amino acid. With respect to regulation, inhibited by the beta-lactamase-blocking agents avibactam, enmetazobactam, relebactam, nacubactam, vaborbactam, taniborbactam, zidebactam, and beta-lactam-analog boronic acids, via a covalent binding to Ser-80. Inhibited by non-beta-lactam, benzo(b)thiophene-2-boronic acid (BZBTH2B) and various cyclic boronates. Not inhibited by clavulanic acid. Inhibited by O-aryloxycarbonyl hydroxamates, via cross-linking of the active site Ser-80 to Lys-331. Weakly inhibited by citric acid. Class C beta-lactamase which confers resistance to penicillins and cephalosporins. Has benzylpenicillin- and cephaloridine-hydrolyzing activity. Has weak cefuroxime, cefotaxime, cefoxitin and oxacillin-hydrolyzing activities. The sequence is that of Beta-lactamase from Escherichia coli (strain K12).